Here is a 438-residue protein sequence, read N- to C-terminus: Beta-1,3-galactosyl-O-glycosyl-glycoprotein beta-1,6-N-acetylglucosaminyltransferase 3 (438 aa).

The Cytoplasmic segment spans residues 1 to 6; that stretch reads MVQWKR. The helical; Signal-anchor for type II membrane protein transmembrane segment at 7-26 threads the bilayer; it reads LCQLHYLWALGCYMLLATVA. Topologically, residues 27-438 are lumenal; the sequence is LKLSFRLKCD…RYKAIYGTEL (412 aa). Cystine bridges form between C70–C227, C161–C382, C182–C209, and C391–C423. N-linked (GlcNAc...) asparagine glycosylation is present at N289.

Belongs to the glycosyltransferase 14 family. Post-translationally, N-glycosylated. In terms of tissue distribution, primarily expressed in mucus-secreting tissues. Expressed in colon, kidney, small intestine, trachea, and stomach, where mucin is produced.

Its subcellular location is the golgi apparatus membrane. It catalyses the reaction a 3-O-[beta-D-galactosyl-(1-&gt;3)-N-acetyl-alpha-D-galactosaminyl]-L-seryl-[protein] + UDP-N-acetyl-alpha-D-glucosamine = 3-O-{beta-D-galactosyl-(1-&gt;3)-[N-acetyl-beta-D-glucosaminyl-(1-&gt;6)]-N-acetyl-alpha-D-galactosaminyl}-L-seryl-[protein] + UDP + H(+). The catalysed reaction is a 3-O-[beta-D-galactosyl-(1-&gt;3)-N-acetyl-alpha-D-galactosaminyl]-L-threonyl-[protein] + UDP-N-acetyl-alpha-D-glucosamine = a 3-O-{beta-D-galactosyl-(1-&gt;3)-[N-acetyl-beta-D-glucosaminyl-(1-&gt;6)]-N-acetyl-alpha-D-galactosaminyl}-L-threonyl-[protein] + UDP + H(+). The enzyme catalyses a beta-D-Gal-(1-&gt;4)-beta-D-GlcNAc-(1-&gt;3)-beta-D-Gal-(1-&gt;4)-beta-D-GlcNAc derivative + UDP-N-acetyl-alpha-D-glucosamine = a beta-D-Gal-(1-&gt;4)-beta-D-GlcNAc-(1-&gt;3)-[beta-D-GlcNAc-(1-&gt;6)]-beta-D-Gal-(1-&gt;4)-N-acetyl-beta-D-glucosaminyl derivative + UDP + H(+). It carries out the reaction 3-O-[N-acetyl-beta-D-glucosaminyl-(1-&gt;3)-N-acetyl-alpha-D-galactosaminyl]-L-seryl-[protein] + UDP-N-acetyl-alpha-D-glucosamine = 3-O-[N-acetyl-beta-D-glucosaminyl-(1-&gt;3)-[N-acetyl-beta-D-glucosaminyl-(1-&gt;6)]-N-acetyl-alpha-D-galactosaminyl]-L-seryl-[protein] + UDP + H(+). It catalyses the reaction a 3-O-[N-acetyl-beta-D-glucosaminyl-(1-&gt;3)-N-acetyl-alpha-D-galactosaminyl]-L-threonyl-[protein] + UDP-N-acetyl-alpha-D-glucosamine = 3-O-[N-acetyl-beta-D-glucosaminyl-(1-&gt;3)-[N-acetyl-beta-D-glucosaminyl-(1-&gt;6)]-N-acetyl-alpha-D-galactosaminyl]-L-threonyl-[protein] + UDP + H(+). It participates in protein modification; protein glycosylation. In terms of biological role, glycosyltransferase that can synthesize all known mucin beta 6 N-acetylglucosaminides. Mediates core 2 and core 4 O-glycan branching, 2 important steps in mucin-type biosynthesis. Also has I-branching enzyme activity by converting linear into branched poly-N-acetyllactosaminoglycans, leading to introduce the blood group I antigen during embryonic development. This is Beta-1,3-galactosyl-O-glycosyl-glycoprotein beta-1,6-N-acetylglucosaminyltransferase 3 (GCNT3) from Homo sapiens (Human).